The primary structure comprises 56 residues: Venom peptide 5 (56 aa).

The first 26 residues, 1–26, serve as a signal peptide directing secretion; sequence MKTASFILSFVVLLIVIITWIGEVSA. The propeptide occupies 27–42; that stretch reads VSEPEPVAKATAHAAA. The cysteines at positions 49 and 54 are disulfide-linked.

In terms of processing, probably contains 1 disulfide bond, which may be crucial for activity, since the linear peptide without disulfide bond is inactive. As to expression, expressed by the venom gland.

Its subcellular location is the secreted. The sequence is that of Venom peptide 5 from Eumenes pomiformis (Potter wasp).